We begin with the raw amino-acid sequence, 595 residues long: Adenine deaminase 3 (595 aa).

It belongs to the metallo-dependent hydrolases superfamily. Adenine deaminase family. Mn(2+) is required as a cofactor.

It carries out the reaction adenine + H2O + H(+) = hypoxanthine + NH4(+). The chain is Adenine deaminase 3 from Rhizobium meliloti (strain 1021) (Ensifer meliloti).